The following is a 600-amino-acid chain: ATP-dependent lipid A-core flippase (600 aa).

A run of 4 helical transmembrane segments spans residues 26-46 (VGIF…QPML), 82-102 (LLIV…NYFL), 167-187 (VFLF…MLAI), and 266-286 (PMLQ…VLFL). Residues 30 to 321 (LLSIIGFVIF…LSEVSSTIQK (292 aa)) enclose the ABC transmembrane type-1 domain. Residues 353–589 (LEVKNLSFFY…NGYYARLHAM (237 aa)) enclose the ABC transporter domain. Position 387–394 (387–394 (GRSGSGKS)) interacts with ATP.

It belongs to the ABC transporter superfamily. Lipid exporter (TC 3.A.1.106) family. In terms of assembly, homodimer.

It is found in the cell inner membrane. It catalyses the reaction ATP + H2O + lipid A-core oligosaccharideSide 1 = ADP + phosphate + lipid A-core oligosaccharideSide 2.. Functionally, involved in lipopolysaccharide (LPS) biosynthesis. Translocates lipid A-core from the inner to the outer leaflet of the inner membrane. Transmembrane domains (TMD) form a pore in the inner membrane and the ATP-binding domain (NBD) is responsible for energy generation. This is ATP-dependent lipid A-core flippase from Pseudomonas savastanoi pv. phaseolicola (strain 1448A / Race 6) (Pseudomonas syringae pv. phaseolicola (strain 1448A / Race 6)).